The following is a 337-amino-acid chain: Ribosomal RNA small subunit methyltransferase C (337 aa).

It belongs to the methyltransferase superfamily. RsmC family. As to quaternary structure, monomer.

The protein localises to the cytoplasm. It catalyses the reaction guanosine(1207) in 16S rRNA + S-adenosyl-L-methionine = N(2)-methylguanosine(1207) in 16S rRNA + S-adenosyl-L-homocysteine + H(+). In terms of biological role, specifically methylates the guanine in position 1207 of 16S rRNA in the 30S particle. The protein is Ribosomal RNA small subunit methyltransferase C of Acinetobacter baumannii (strain ATCC 17978 / DSM 105126 / CIP 53.77 / LMG 1025 / NCDC KC755 / 5377).